A 383-amino-acid chain; its full sequence is Pyruvate synthase subunit PorA (383 aa).

Heterotetramer of one alpha, one beta, one delta and one gamma chain.

It carries out the reaction 2 oxidized [2Fe-2S]-[ferredoxin] + pyruvate + CoA = 2 reduced [2Fe-2S]-[ferredoxin] + acetyl-CoA + CO2 + H(+). This is Pyruvate synthase subunit PorA (porA) from Methanothermobacter thermautotrophicus (strain ATCC 29096 / DSM 1053 / JCM 10044 / NBRC 100330 / Delta H) (Methanobacterium thermoautotrophicum).